Consider the following 209-residue polypeptide: Uracil phosphoribosyltransferase (209 aa).

5-phospho-alpha-D-ribose 1-diphosphate contacts are provided by residues Arg-79, Arg-104, and 131–139 (DPMLATGGS). Residues Ile-194 and 199-201 (GDA) contribute to the uracil site. Position 200 (Asp-200) interacts with 5-phospho-alpha-D-ribose 1-diphosphate.

This sequence belongs to the UPRTase family. Mg(2+) is required as a cofactor.

It catalyses the reaction UMP + diphosphate = 5-phospho-alpha-D-ribose 1-diphosphate + uracil. Its pathway is pyrimidine metabolism; UMP biosynthesis via salvage pathway; UMP from uracil: step 1/1. Allosterically activated by GTP. Catalyzes the conversion of uracil and 5-phospho-alpha-D-ribose 1-diphosphate (PRPP) to UMP and diphosphate. The polypeptide is Uracil phosphoribosyltransferase (Exiguobacterium sp. (strain ATCC BAA-1283 / AT1b)).